Here is a 235-residue protein sequence, read N- to C-terminus: Bypass of stop codon protein 2 (235 aa).

A helical membrane pass occupies residues Phe-68–Ile-88. Ser-177 is subject to Phosphoserine.

The protein localises to the lipid droplet. The protein resides in the membrane. This is Bypass of stop codon protein 2 (BSC2) from Saccharomyces cerevisiae (strain ATCC 204508 / S288c) (Baker's yeast).